The following is a 151-amino-acid chain: MKIVIQRVKSASVSIDGKIKEKINQGFLLLVGVEDADSNFDLDYAVRKIAQMRIFSDEADKMNLSVQDIQGEILSISQFTLYAETKKGNRPSFSAAGKPDFAKAMYEKFNDSLAQIVPVKAGVFGADMQVELINDGPVTIILDTKEARKNA.

The Gly-cisPro motif, important for rejection of L-amino acids signature appears at 136-137 (GP).

It belongs to the DTD family. As to quaternary structure, homodimer.

The protein resides in the cytoplasm. It carries out the reaction glycyl-tRNA(Ala) + H2O = tRNA(Ala) + glycine + H(+). The enzyme catalyses a D-aminoacyl-tRNA + H2O = a tRNA + a D-alpha-amino acid + H(+). Its function is as follows. An aminoacyl-tRNA editing enzyme that deacylates mischarged D-aminoacyl-tRNAs. Also deacylates mischarged glycyl-tRNA(Ala), protecting cells against glycine mischarging by AlaRS. Acts via tRNA-based rather than protein-based catalysis; rejects L-amino acids rather than detecting D-amino acids in the active site. By recycling D-aminoacyl-tRNA to D-amino acids and free tRNA molecules, this enzyme counteracts the toxicity associated with the formation of D-aminoacyl-tRNA entities in vivo and helps enforce protein L-homochirality. The protein is D-aminoacyl-tRNA deacylase of Lactococcus lactis subsp. cremoris (strain MG1363).